The sequence spans 221 residues: Urease accessory protein UreF (221 aa).

The protein belongs to the UreF family. In terms of assembly, ureD, UreF and UreG form a complex that acts as a GTP-hydrolysis-dependent molecular chaperone, activating the urease apoprotein by helping to assemble the nickel containing metallocenter of UreC. The UreE protein probably delivers the nickel.

The protein resides in the cytoplasm. Required for maturation of urease via the functional incorporation of the urease nickel metallocenter. This chain is Urease accessory protein UreF, found in Vibrio parahaemolyticus.